Consider the following 434-residue polypeptide: MMTTLRKLPLALAIAAGVLTTQAMAVDFKGYARSGIGWTGSGGEQQCFKATGADSKYRLGNECETYAELKLGQEVWKEGDKSFYFDTNLAYSVSQRSDWEDVTPGFREVNVQGKNLIEWLPGANMWAGKRFYQRHDVHMIDFYYWDISGPGAGLENIDLGFGKLSAAVTRNSESGGSYGYLDNELDQRPTVNDTFDVRLAGLELNPGGTLELGLDYGRANAQDGYSLADGASKDGWLVTAEHTQSILTGYNKFVLQYATDSMTSQNNGRNQGSTIDNNGKMIRVLDHGAIDFNDQWAMMYVAMFQDIDRDNNNGSTWYTVGVRPMYKWTPIMSTLLEAGYDNVKSQRTGDRNGQYKVTLAQQWQAGNSIWSRPAIRVFATYAKWDEKWGYATSSDAEGNPGLKAGTAYNDTSMHTFSRGNDDEVTFGAQMEIWW.

An N-terminal signal peptide occupies residues 1 to 25 (MMTTLRKLPLALAIAAGVLTTQAMA).

Belongs to the porin LamB (TC 1.B.3) family. Homotrimer formed of three 18-stranded antiparallel beta-barrels, containing three independent channels.

The protein resides in the cell outer membrane. The catalysed reaction is beta-maltose(in) = beta-maltose(out). Involved in the transport of maltose and maltodextrins. This Serratia proteamaculans (strain 568) protein is Maltoporin.